We begin with the raw amino-acid sequence, 186 residues long: Tumor necrosis factor alpha-induced protein 8-like protein 1 (186 aa).

The protein belongs to the TNFAIP8 family. In terms of assembly, interacts with FBXW5; TNFAIP8L1 competes with TSC2 to bind FBXW5 increasing TSC2 stability by preventing its ubiquitination. As to expression, detected in wide variety tissues, such as neurons in brain, hepatocytes, germ cells of female and male reproductive organs, muscular tissues and variety types of cells of the epithelial origin (at protein level).

It localises to the cytoplasm. In terms of biological role, acts as a negative regulator of mTOR activity. The protein is Tumor necrosis factor alpha-induced protein 8-like protein 1 (Tnfaip8l1) of Mus musculus (Mouse).